Consider the following 129-residue polypeptide: Histone H2A.J (129 aa).

The interval 1–22 (MSGRGKQGGKVRAKAKSRSSRA) is disordered. An N6-acetyllysine mark is found at Lys-6 and Lys-10. Residues 7–19 (QGGKVRAKAKSRS) are compositionally biased toward basic residues. N6-lactoyllysine; alternate is present on Lys-10. Gln-105 is modified (N5-methylglutamine). Thr-121 is subject to Phosphothreonine; by DCAF1.

Belongs to the histone H2A family. As to quaternary structure, the nucleosome is a histone octamer containing two molecules each of H2A, H2B, H3 and H4 assembled in one H3-H4 heterotetramer and two H2A-H2B heterodimers. The octamer wraps approximately 147 bp of DNA. Post-translationally, glutamine methylation at Gln-105 (H2AQ104me) by FBL is specifically dedicated to polymerase I. It is present at 35S ribosomal DNA locus and impairs binding of the FACT complex. In terms of processing, monoubiquitination of Lys-120 (H2AXK119ub) gives a specific tag for epigenetic transcriptional repression. Following DNA double-strand breaks (DSBs), it is ubiquitinated through 'Lys-63' linkage of ubiquitin moieties. Phosphorylation on Ser-2 (H2AS1ph) is enhanced during mitosis. Phosphorylation on Ser-2 by RPS6KA5/MSK1 directly represses transcription. Acetylation of H3 inhibits Ser-2 phosphorylation by RPS6KA5/MSK1. Phosphorylation at Thr-121 (H2AT120ph) by DCAF1 is present in the regulatory region of many tumor suppresor genes and down-regulates their transcription.

It is found in the nucleus. The protein resides in the chromosome. Its function is as follows. Core component of nucleosome. Nucleosomes wrap and compact DNA into chromatin, limiting DNA accessibility to the cellular machineries which require DNA as a template. Histones thereby play a central role in transcription regulation, DNA repair, DNA replication and chromosomal stability. DNA accessibility is regulated via a complex set of post-translational modifications of histones, also called histone code, and nucleosome remodeling. This is Histone H2A.J from Bos taurus (Bovine).